Consider the following 527-residue polypeptide: MNINFSKDDITGLPKSTKEEDENDFSSLDYSDLFMDVEIGRGSFGQVQKASYFGTDVAVKQLSTLVSIDPDYFKFMLREIKILKGMRHPNIVQYIGACCHEGRYMIVTEYIKGGDLHQFIKARGVSNISWTLRMKLALDIASAFSYLHSKKVIFRDLKAKNILVDEIGDGLYRAKVIDFGFARIFDGKDTNNLTICGSENTMSPEVIVGSSYNDSCDVYSYGVLLLELICGSRVVKTQLKRTPMNAFDMNLEKAEHLAPESCPRAFMDLAKWCCSYNPKDRPTFKIVVEGLKVLTNQQLKDLPVKGKSKPYIDPDEDSFIDPNDDSNNNNNSENNNNNNDNSNENNENNNENNNNSNENNNKKNKNGSGGDISGSSVIIKTDEEESFNSVVYKEHAVAQPLPNIDYGGQNKRQNNIFNPSFFTPPPNSKSMMDLKQSSAVDEDEDEDEDDVPSELLTSLTVNDIRYSNPKSFAATISTPNLNYATALDQDPPKPLSQSACATVLGGIPPMQPKKKPNNKNKKKKKKL.

The span at 1-10 (MNINFSKDDI) shows a compositional bias: basic and acidic residues. Residues 1–24 (MNINFSKDDITGLPKSTKEEDEND) are disordered. Residues 33-294 (LFMDVEIGRG…KIVVEGLKVL (262 aa)) form the Protein kinase domain. ATP is bound by residues 39 to 47 (IGRGSFGQV) and Lys60. Residue Asp156 is the Proton acceptor of the active site. Disordered regions lie at residues 304–375 (VKGK…ISGS), 422–452 (FTPPPNSKSMMDLKQSSAVDEDEDEDEDDVP), and 485–527 (TALD…KKKL). The segment covering 313-324 (DPDEDSFIDPND) has biased composition (acidic residues). The span at 325–359 (DSNNNNNSENNNNNNDNSNENNENNNENNNNSNEN) shows a compositional bias: low complexity. Over residues 440-452 (VDEDEDEDEDDVP) the composition is skewed to acidic residues. The segment covering 512 to 527 (PKKKPNNKNKKKKKKL) has biased composition (basic residues).

The protein belongs to the protein kinase superfamily. TKL Ser/Thr protein kinase family.

The enzyme catalyses L-seryl-[protein] + ATP = O-phospho-L-seryl-[protein] + ADP + H(+). The catalysed reaction is L-threonyl-[protein] + ATP = O-phospho-L-threonyl-[protein] + ADP + H(+). The sequence is that of Probable serine/threonine-protein kinase DDB_G0271538 from Dictyostelium discoideum (Social amoeba).